Consider the following 462-residue polypeptide: Argininosuccinate lyase (462 aa).

Belongs to the lyase 1 family. Argininosuccinate lyase subfamily.

It is found in the cytoplasm. It catalyses the reaction 2-(N(omega)-L-arginino)succinate = fumarate + L-arginine. Its pathway is amino-acid biosynthesis; L-arginine biosynthesis; L-arginine from L-ornithine and carbamoyl phosphate: step 3/3. The protein is Argininosuccinate lyase of Gloeothece citriformis (strain PCC 7424) (Cyanothece sp. (strain PCC 7424)).